Reading from the N-terminus, the 289-residue chain is Cuticle collagen 19 (289 aa).

The N-terminal stretch at 1-18 (MGKLIVVGSCGVLVCVLA) is a signal peptide. Residues 95-289 (SEGCPAGPPG…PCPSRAAYKA (195 aa)) form a disordered region. Triple-helical region stretches follow at residues 101-130 (GPPG…PGVI) and 147-269 (GRPG…KGED). Residues 162 to 183 (GPAGGNGRRGPPGPVGGPGEQG) show a composition bias toward gly residues. 2 stretches are compositionally biased toward low complexity: residues 184–207 (PQGD…GEPG) and 223–239 (PRGE…PGND).

Belongs to the cuticular collagen family. Collagen polypeptide chains are complexed within the cuticle by disulfide bonds and other types of covalent cross-links.

Functionally, nematode cuticles are composed largely of collagen-like proteins. The cuticle functions both as an exoskeleton and as a barrier to protect the worm from its environment. This is Cuticle collagen 19 (col-19) from Caenorhabditis elegans.